The chain runs to 964 residues: Pumilio homolog 3 (964 aa).

A disordered region spans residues 1–22 (MMIPELGRRPMHRGNEDSSFGD). Serine 192 is modified (phosphoserine). 3 disordered regions span residues 204 to 235 (PVVQ…ASQG), 256 to 300 (GTPD…TSGL), and 343 to 388 (DGHN…VANP). 2 stretches are compositionally biased toward polar residues: residues 207–216 (QQPSRPASRN) and 223–234 (DSNNNLSPSASQ). Position 257 is a phosphothreonine (threonine 257). Polar residues-rich tracts occupy residues 287 to 300 (TSNQ…TSGL) and 356 to 384 (RSDQ…SGSG). The 341-residue stretch at 606-946 (FGSSMLEEFK…HIVARVEKLV (341 aa)) folds into the PUM-HD domain. 8 Pumilio repeats span residues 626–661 (EIAG…MVYE), 662–697 (EIMP…ELGE), 698–733 (KLID…QMVK), 734–769 (ELDG…FIIS), 770–806 (TFFG…KVME), 807–842 (EILS…VIIK), 843–878 (ELAG…LLVN), and 879–920 (EMLG…LILT).

It is found in the cytoplasm. Functionally, sequence-specific RNA-binding protein that regulates translation and mRNA stability by binding the 3'-UTR of target mRNAs. Binds the APUM-binding elements (APBEs) in the 3'-UTR mRNA sequence of CLV1, PNH, WUS and FAS2. This is Pumilio homolog 3 (APUM3) from Arabidopsis thaliana (Mouse-ear cress).